A 487-amino-acid polypeptide reads, in one-letter code: Glutamyl-tRNA(Gln) amidotransferase subunit A (487 aa).

Residues K77 and S152 each act as charge relay system in the active site. S176 serves as the catalytic Acyl-ester intermediate.

Belongs to the amidase family. GatA subfamily. Heterotrimer of A, B and C subunits.

It carries out the reaction L-glutamyl-tRNA(Gln) + L-glutamine + ATP + H2O = L-glutaminyl-tRNA(Gln) + L-glutamate + ADP + phosphate + H(+). Functionally, allows the formation of correctly charged Gln-tRNA(Gln) through the transamidation of misacylated Glu-tRNA(Gln) in organisms which lack glutaminyl-tRNA synthetase. The reaction takes place in the presence of glutamine and ATP through an activated gamma-phospho-Glu-tRNA(Gln). This Lactiplantibacillus plantarum (strain ATCC BAA-793 / NCIMB 8826 / WCFS1) (Lactobacillus plantarum) protein is Glutamyl-tRNA(Gln) amidotransferase subunit A.